Reading from the N-terminus, the 291-residue chain is Nucleotide-binding protein Ccel_2290 (291 aa).

Residue 8-15 (GMSGAGKS) coordinates ATP. 59 to 62 (DIRG) lines the GTP pocket.

It belongs to the RapZ-like family.

In terms of biological role, displays ATPase and GTPase activities. The chain is Nucleotide-binding protein Ccel_2290 from Ruminiclostridium cellulolyticum (strain ATCC 35319 / DSM 5812 / JCM 6584 / H10) (Clostridium cellulolyticum).